We begin with the raw amino-acid sequence, 230 residues long: Type II restriction enzyme MjaV (230 aa).

The enzyme catalyses Endonucleolytic cleavage of DNA to give specific double-stranded fragments with terminal 5'-phosphates.. Functionally, a P subtype restriction enzyme that recognizes the double-stranded sequence 5'-GTAC-3'; the cleavage site is unknown. This chain is Type II restriction enzyme MjaV (mjaVR), found in Methanocaldococcus jannaschii (strain ATCC 43067 / DSM 2661 / JAL-1 / JCM 10045 / NBRC 100440) (Methanococcus jannaschii).